Reading from the N-terminus, the 199-residue chain is Imidazole glycerol phosphate synthase subunit HisH (199 aa).

In terms of domain architecture, Glutamine amidotransferase type-1 spans 3–199 (NITIIDTGCA…LKNFVEKVPF (197 aa)). The active-site Nucleophile is Cys-78. Residues His-178 and Glu-180 contribute to the active site.

In terms of assembly, heterodimer of HisH and HisF.

It localises to the cytoplasm. The catalysed reaction is 5-[(5-phospho-1-deoxy-D-ribulos-1-ylimino)methylamino]-1-(5-phospho-beta-D-ribosyl)imidazole-4-carboxamide + L-glutamine = D-erythro-1-(imidazol-4-yl)glycerol 3-phosphate + 5-amino-1-(5-phospho-beta-D-ribosyl)imidazole-4-carboxamide + L-glutamate + H(+). It catalyses the reaction L-glutamine + H2O = L-glutamate + NH4(+). The protein operates within amino-acid biosynthesis; L-histidine biosynthesis; L-histidine from 5-phospho-alpha-D-ribose 1-diphosphate: step 5/9. In terms of biological role, IGPS catalyzes the conversion of PRFAR and glutamine to IGP, AICAR and glutamate. The HisH subunit catalyzes the hydrolysis of glutamine to glutamate and ammonia as part of the synthesis of IGP and AICAR. The resulting ammonia molecule is channeled to the active site of HisF. This is Imidazole glycerol phosphate synthase subunit HisH (hisH) from Haemophilus influenzae (strain ATCC 51907 / DSM 11121 / KW20 / Rd).